We begin with the raw amino-acid sequence, 135 residues long: uncharacterized protein (135 aa).

This is an uncharacterized protein from Saccharomyces cerevisiae (strain ATCC 204508 / S288c) (Baker's yeast).